A 360-amino-acid polypeptide reads, in one-letter code: MAKEALPSIYDYTLDELKEILKPSFRAKQVYNWLYKKYASSYDEMKNLPKELVEDLKENYPIDIMQIVKKEQSRDGSIKYLFKLRDNHTVEAVLLLMKDKKIDEDGQIVRSEKYTVCISSQVGCKVGCSFCLTAKGGFVRNLTVGEYIAQIVNIKRDNDIAENKALNIVYMGMGEPLDNFDNFTKAVEIFSELDGLAISRRRQTVSTSGIATKIKKLGEKDLQIQLAISLHAVDDELRSELIPMNKAYNIASIIQAVKAFPVDTRKKVMFEYLVIKDKNDSIEAAKKLVSLLNGIQAKVNLIYFNPYPGTSYQRPQEKDMLKFKDFLNQKGVICTIRESKGLDISAACGQLKEKEANGNS.

Glu-91 serves as the catalytic Proton acceptor. The region spanning 110-343 (RSEKYTVCIS…CTIRESKGLD (234 aa)) is the Radical SAM core domain. Residues Cys-117 and Cys-348 are joined by a disulfide bond. Positions 124, 128, and 131 each coordinate [4Fe-4S] cluster. S-adenosyl-L-methionine contacts are provided by residues 174-175 (GE), Ser-206, 229-231 (SLH), and Asn-305. Residue Cys-348 is the S-methylcysteine intermediate of the active site.

Belongs to the radical SAM superfamily. RlmN family. [4Fe-4S] cluster serves as cofactor.

Its subcellular location is the cytoplasm. The enzyme catalyses adenosine(2503) in 23S rRNA + 2 reduced [2Fe-2S]-[ferredoxin] + 2 S-adenosyl-L-methionine = 2-methyladenosine(2503) in 23S rRNA + 5'-deoxyadenosine + L-methionine + 2 oxidized [2Fe-2S]-[ferredoxin] + S-adenosyl-L-homocysteine. It catalyses the reaction adenosine(37) in tRNA + 2 reduced [2Fe-2S]-[ferredoxin] + 2 S-adenosyl-L-methionine = 2-methyladenosine(37) in tRNA + 5'-deoxyadenosine + L-methionine + 2 oxidized [2Fe-2S]-[ferredoxin] + S-adenosyl-L-homocysteine. Specifically methylates position 2 of adenine 2503 in 23S rRNA and position 2 of adenine 37 in tRNAs. m2A2503 modification seems to play a crucial role in the proofreading step occurring at the peptidyl transferase center and thus would serve to optimize ribosomal fidelity. The protein is Dual-specificity RNA methyltransferase RlmN of Aliarcobacter butzleri (strain RM4018) (Arcobacter butzleri).